Reading from the N-terminus, the 245-residue chain is 8-amino-3,8-dideoxy-manno-octulosonate cytidylyltransferase (245 aa).

The protein belongs to the KdsB family.

The protein localises to the cytoplasm. The enzyme catalyses 8-amino-3,8-dideoxy-alpha-D-manno-octulosonate + CTP = CMP-8-amino-3,8-dideoxy-alpha-D-manno-oct-2-ulosonate + diphosphate. The protein operates within bacterial outer membrane biogenesis; lipopolysaccharide biosynthesis. Activates KDO8N (a required 8-carbon sugar) for incorporation into bacterial lipopolysaccharide in the Shewanella genus. This is 8-amino-3,8-dideoxy-manno-octulosonate cytidylyltransferase from Shewanella loihica (strain ATCC BAA-1088 / PV-4).